The primary structure comprises 298 residues: Large ribosomal subunit protein uL18 (298 aa).

This sequence belongs to the universal ribosomal protein uL18 family. As to quaternary structure, component of the large ribosomal subunit. Mature ribosomes consist of a small (40S) and a large (60S) subunit. The 40S subunit contains about 32 different proteins and 1 molecule of RNA (18S). The 60S subunit contains 45 different proteins and 3 molecules of RNA (25S, 5.8S and 5S).

Its subcellular location is the cytoplasm. In terms of biological role, component of the ribosome, a large ribonucleoprotein complex responsible for the synthesis of proteins in the cell. The small ribosomal subunit (SSU) binds messenger RNAs (mRNAs) and translates the encoded message by selecting cognate aminoacyl-transfer RNA (tRNA) molecules. The large subunit (LSU) contains the ribosomal catalytic site termed the peptidyl transferase center (PTC), which catalyzes the formation of peptide bonds, thereby polymerizing the amino acids delivered by tRNAs into a polypeptide chain. The nascent polypeptides leave the ribosome through a tunnel in the LSU and interact with protein factors that function in enzymatic processing, targeting, and the membrane insertion of nascent chains at the exit of the ribosomal tunnel. In Candida albicans (strain SC5314 / ATCC MYA-2876) (Yeast), this protein is Large ribosomal subunit protein uL18.